The sequence spans 122 residues: ATP synthase epsilon chain (122 aa).

A compositionally biased stretch (basic and acidic residues) spans 97-112 (EDLKSERELTRSRGDA). Positions 97-122 (EDLKSERELTRSRGDAALRATRRLNS) are disordered.

This sequence belongs to the ATPase epsilon chain family. F-type ATPases have 2 components, CF(1) - the catalytic core - and CF(0) - the membrane proton channel. CF(1) has five subunits: alpha(3), beta(3), gamma(1), delta(1), epsilon(1). CF(0) has three main subunits: a, b and c.

Its subcellular location is the cell membrane. Its function is as follows. Produces ATP from ADP in the presence of a proton gradient across the membrane. This Corynebacterium aurimucosum (strain ATCC 700975 / DSM 44827 / CIP 107346 / CN-1) (Corynebacterium nigricans) protein is ATP synthase epsilon chain.